Reading from the N-terminus, the 1101-residue chain is Protein unc-13 homolog (1101 aa).

The MHD1 domain maps to 663–804 (VSVFPAADSL…ASKDDLVPPV (142 aa)). The 111-residue stretch at 941 to 1051 (QSRLEGLIEA…YETRELIDDL (111 aa)) folds into the MHD2 domain.

This sequence belongs to the unc-13 family. In terms of tissue distribution, expressed in roots, cotyledons, leaves, stems and flowers. Expressed in guard cells and mesophyll cells of leaves.

It localises to the cytoplasm. The protein resides in the cell membrane. Functionally, controls the tethering of the proton ATPase AHA1 to the plasma membrane. Is essential for stomatal opening in response to low concentration of carbon dioxide and light. The protein is Protein unc-13 homolog of Arabidopsis thaliana (Mouse-ear cress).